The chain runs to 365 residues: Flagellar P-ring protein (365 aa).

An N-terminal signal peptide occupies residues 1-21; the sequence is MKSLRLVALFCCLLPLGMAHA.

It belongs to the FlgI family. In terms of assembly, the basal body constitutes a major portion of the flagellar organelle and consists of four rings (L,P,S, and M) mounted on a central rod.

It is found in the periplasm. The protein localises to the bacterial flagellum basal body. In terms of biological role, assembles around the rod to form the L-ring and probably protects the motor/basal body from shearing forces during rotation. This chain is Flagellar P-ring protein, found in Aeromonas hydrophila subsp. hydrophila (strain ATCC 7966 / DSM 30187 / BCRC 13018 / CCUG 14551 / JCM 1027 / KCTC 2358 / NCIMB 9240 / NCTC 8049).